The primary structure comprises 483 residues: Glycogen synthase (483 aa).

Lys15 serves as a coordination point for ADP-alpha-D-glucose.

Belongs to the glycosyltransferase 1 family. Bacterial/plant glycogen synthase subfamily.

The enzyme catalyses [(1-&gt;4)-alpha-D-glucosyl](n) + ADP-alpha-D-glucose = [(1-&gt;4)-alpha-D-glucosyl](n+1) + ADP + H(+). It functions in the pathway glycan biosynthesis; glycogen biosynthesis. Its function is as follows. Synthesizes alpha-1,4-glucan chains using ADP-glucose. The protein is Glycogen synthase of Desulfatibacillum aliphaticivorans.